Here is a 75-residue protein sequence, read N- to C-terminus: Mating pheromone Er-10 (75 aa).

An N-terminal signal peptide occupies residues 1–19 (MNKLAILAIIAMVLFSANA). Residues 20-37 (FRFQSRIRSNVEAKTETR) constitute a propeptide that is removed on maturation. Cystine bridges form between C40/C56, C47/C74, and C52/C64.

Homodimer.

It localises to the secreted. Its function is as follows. Mating ciliate pheromones (or gamones) are diffusible extracellular communication signals that distinguish different intraspecific classes of cells commonly referred to as 'mating types'. They prepare the latter for conjugation by changing their cell surface properties. In Euplotes raikovi, this protein is Mating pheromone Er-10 (MAT10).